A 743-amino-acid chain; its full sequence is Putative metallophosphoesterase At3g03305 (743 aa).

Residues 1–40 (MESIGDDDELRSKTVSLPRRISFTILLLLLLISLSTRVSG) form the signal peptide. Asp-66, His-68, and Asp-101 together coordinate a divalent metal cation. Helical transmembrane passes span 514–534 (ILWP…CIII), 565–585 (MPVV…FPWF), 623–643 (VMVV…LVVC), 687–704 (LFRK…WKHF), and 716–736 (MNVV…LYVI).

Belongs to the metallophosphoesterase superfamily. It depends on a divalent metal cation as a cofactor.

The protein localises to the membrane. This is Putative metallophosphoesterase At3g03305 from Arabidopsis thaliana (Mouse-ear cress).